We begin with the raw amino-acid sequence, 138 residues long: Ribosome-binding factor A (138 aa).

This sequence belongs to the RbfA family. As to quaternary structure, monomer. Binds 30S ribosomal subunits, but not 50S ribosomal subunits or 70S ribosomes.

The protein localises to the cytoplasm. One of several proteins that assist in the late maturation steps of the functional core of the 30S ribosomal subunit. Associates with free 30S ribosomal subunits (but not with 30S subunits that are part of 70S ribosomes or polysomes). Required for efficient processing of 16S rRNA. May interact with the 5'-terminal helix region of 16S rRNA. The chain is Ribosome-binding factor A from Bradyrhizobium sp. (strain BTAi1 / ATCC BAA-1182).